Here is a 508-residue protein sequence, read N- to C-terminus: Aldehyde dehydrogenase (508 aa).

Residues Glu-264 and Cys-303 contribute to the active site.

This sequence belongs to the aldehyde dehydrogenase family.

It catalyses the reaction acetaldehyde + NAD(+) + H2O = acetate + NADH + 2 H(+). It participates in organosulfur degradation. Catalyzes the NAD(+)-dependent oxidation of acetaldehyde to acetate. The polypeptide is Aldehyde dehydrogenase (Paracoccus denitrificans (strain Pd 1222)).